Consider the following 382-residue polypeptide: ADP,ATP carrier protein, mitochondrial (382 aa).

The N-terminal 71 residues, 1-71 (MAEQANQPTV…PMMSSSPIFA (71 aa)), are a transit peptide targeting the mitochondrion. Solcar repeat units lie at residues 80 to 173 (KNFM…FKRL), 185 to 277 (KWFG…LKPV), and 285 to 371 (DNFF…LQIL). Helical transmembrane passes span 82-109 (FMID…VKLL), 150-174 (TANV…KRLF), 183-203 (YWKW…SSLF), 253-274 (FNIS…YDSL), and 288-308 (FASF…SYPI). Residues Arg155 and Lys167 each contribute to the ADP site. Arg312 provides a ligand contact to ADP. An important for transport activity region spans residues 312–317 (RRRMMM). The Nucleotide carrier signature motif motif lies at 312–317 (RRRMMM). Residues 348 to 368 (AGANILRAIAGAGVLSGYDQL) form a helical membrane-spanning segment.

Belongs to the mitochondrial carrier (TC 2.A.29) family. As to quaternary structure, monomer.

The protein localises to the mitochondrion inner membrane. It carries out the reaction ADP(in) + ATP(out) = ADP(out) + ATP(in). Its activity is regulated as follows. The matrix-open state (m-state) is inhibited by the membrane-permeable bongkrekic acid (BKA). The cytoplasmic-open state (c-state) is inhibited by the membrane-impermeable toxic inhibitor carboxyatractyloside (CATR). In terms of biological role, ADP:ATP antiporter that mediates import of ADP into the mitochondrial matrix for ATP synthesis, and export of ATP out to fuel the cell. Cycles between the cytoplasmic-open state (c-state) and the matrix-open state (m-state): operates by the alternating access mechanism with a single substrate-binding site intermittently exposed to either the cytosolic (c-state) or matrix (m-state) side of the inner mitochondrial membrane. This is ADP,ATP carrier protein, mitochondrial from Oryza sativa subsp. japonica (Rice).